A 1621-amino-acid chain; its full sequence is Nestin (1621 aa).

Met-1 carries the N-acetylmethionine modification. Residues 1-7 form a head region; that stretch reads MEGCMGE. The segment at 8 to 43 is coil 1A; sequence ESFQMWELNRRLEAYLARVKALEEQNELLSAELGGL. One can recognise an IF rod domain in the interval 8–313; it reads ESFQMWELNR…TLLEAENSRL (306 aa). A linker 1 region spans residues 44-55; sequence RAQSADTSWRAH. A coil 1B region spans residues 56-151; that stretch reads ADDELAALRA…VAHEEERVGL (96 aa). Residues 152-173 form a linker 12 region; it reads NAQAACAPRCPAPPRGPPAPAP. Positions 174 to 192 are coil 2A; the sequence is EVEELARRLGEAWRGAVRG. A linker 2 region spans residues 193 to 195; it reads YQE. A coil 2B region spans residues 196–313; that stretch reads RVAHMETSLG…TLLEAENSRL (118 aa). A Phosphoserine modification is found at Ser-311. The tract at residues 314-1621 is tail; the sequence is QTPGGGSKTS…DRESWSSGED (1308 aa). At Thr-315 the chain carries Phosphothreonine. Ser-325 is modified (phosphoserine). Thr-338 carries the post-translational modification Phosphothreonine. Phosphoserine occurs at positions 355 and 358. Thr-388 bears the Phosphothreonine mark. Phosphoserine is present on residues Ser-398, Ser-471, Ser-476, Ser-548, Ser-564, Ser-578, Ser-588, Ser-638, Ser-680, Ser-702, Ser-746, and Ser-768. The interval 439-490 is disordered; the sequence is SVLPGPEEPGGQRQEASTGQSPEDHASLAPPLSPDHSSLEAKDGESGGSRVF. Positions 670-788 are disordered; the sequence is LEKENQEPLR…PPEKVDLEPL (119 aa). Composition is skewed to basic and acidic residues over residues 687–725, 736–770, and 779–788; these read EALRPLTKENQEPLRSLEDENKEAFRSLEKENQEPLKTL, LETENHKSLRSLEEQDQETLRTLEKETQQRRRSLG, and PPEKVDLEPL. Ser-790 carries the phosphoserine modification. A Glycyl lysine isopeptide (Lys-Gly) (interchain with G-Cter in SUMO1); alternate cross-link involves residue Lys-811. A Glycyl lysine isopeptide (Lys-Gly) (interchain with G-Cter in SUMO2); alternate cross-link involves residue Lys-811. Phosphoserine is present on residues Ser-820, Ser-831, and Ser-842. Thr-851 is subject to Phosphothreonine. Phosphoserine occurs at positions 894, 905, 913, and 934. The interval 895-1593 is disordered; that stretch reads LGAWNLENLR…GSALKTSWAG (699 aa). 4 stretches are compositionally biased toward basic and acidic residues: residues 904–936, 949–960, 980–994, and 1012–1024; these read RSPEEVDKESQRNLEEEENLGKGEYQESLRSLE, QRWEDTVEKDQE, LNLREQDGFTGKEEV, and GHPESPEPKEQRG. The residue at position 1016 (Ser-1016) is a Phosphoserine. A compositionally biased stretch (low complexity) spans 1085-1098; it reads GSEPAMGESAAGAE. Over residues 1099–1110 the composition is skewed to gly residues; sequence PGPGQGVGGLGD. Basic and acidic residues-rich tracts occupy residues 1129-1145 and 1159-1184; these read LEAKRVQGLEGPRKDLE and GKSRDPWEPPREGREESEAEAPRGAE. Phosphoserine is present on residues Ser-1261, Ser-1282, Ser-1286, Ser-1310, Ser-1347, Ser-1409, Ser-1418, and Ser-1452. The span at 1275-1292 shows a compositional bias: acidic residues; it reads PQEEGEESREESEEDELG. The span at 1409–1428 shows a compositional bias: acidic residues; it reads SDGFADEEESGEEGEEDQEE. Low complexity-rich tracts occupy residues 1440-1453 and 1460-1470; these read GSSVGSLQALSSSQ and SDSVSVSVPWD. Residues 1486-1495 show a composition bias toward polar residues; it reads ETESQDSAEP. Phosphoserine is present on residues Ser-1496, Ser-1498, Ser-1577, Ser-1617, and Ser-1618.

It belongs to the intermediate filament family. As to quaternary structure, forms homodimers and homotetramers in vitro. In mixtures with other intermediate filament proteins such as vimentin and alpha-internexin, tis protein preferentially forms heterodimers which can assemble to form intermediate filaments if nestin does not exceed 25%. Interacts with FHOD3. Post-translationally, constitutively phosphorylated. This increases during mitosis when the cytoplasmic intermediate filament network is reorganized. CNS stem cells.

Functionally, required for brain and eye development. Promotes the disassembly of phosphorylated vimentin intermediate filaments (IF) during mitosis and may play a role in the trafficking and distribution of IF proteins and other cellular factors to daughter cells during progenitor cell division. Required for survival, renewal and mitogen-stimulated proliferation of neural progenitor cells. The polypeptide is Nestin (NES) (Homo sapiens (Human)).